A 301-amino-acid polypeptide reads, in one-letter code: Cytosolic sulfotransferase 2 (301 aa).

3'-phosphoadenylyl sulfate is bound at residue 53 to 58; the sequence is KAGTTW. His115 acts as the Proton acceptor in catalysis. 3'-phosphoadenylyl sulfate is bound by residues Arg137, Ser145, Tyr201, 235 to 240, and 263 to 265; these read VQFDVM and RKG.

It belongs to the sulfotransferase 1 family. Expressed in liver.

The protein resides in the cytoplasm. With respect to regulation, inhibited by Co(2+), Zn(2+), Cd(2+) and Pb(2+) ions. Inactivated by Hg(2+) and Cu(2+) ions. Functionally, sulfotransferase that utilizes 3'-phospho-5'-adenylyl sulfate (PAPS) as sulfonate donor to catalyze the sulfate conjugation of a variety of xenobiotic and endogenous compounds, including 2-naphthol, hydroxychlorobiphenyls, T3 (triiodo-L-thyronine), T4 (thyroxine), estrone and DOPA. This Danio rerio (Zebrafish) protein is Cytosolic sulfotransferase 2.